The primary structure comprises 359 residues: MKSIGLNLSGREYKILIGSDLLSETATLLREAIPCDRVVVITNIDINRIYGKKLKKHLESKGIESLFLELPEGEIHKTLDMAAHIYPQLINHFAERNTPILALGGGVIGDLSGFVAATYQRGVPLIHLPTSLLSQVDSSIGGKVAVNHGGVKNIVGSFYQPRLVIADTGCLKTLPEKEFACGMAEIIKSAAIGSSELFRLLETNTQAVKDRSPEVMEDIVSQTAAIKASIVCQDETDRGIRNILNFGHTLGHALESTSSFSQSHGAAVAIGMCFAARLSVRLGLCENETALRLEKLIADFGLPTNPKDIDPDKIIEAMHHDKKVSDGRIRFILLKRPGEALIAENILKPDVLSVLEEMK.

NAD(+) is bound by residues 72-77, 106-110, 130-131, Lys143, Lys152, and 170-173; these read EGEIHK, GVIGD, TS, and CLKT. Zn(2+)-binding residues include Glu185, His248, and His264.

The protein belongs to the sugar phosphate cyclases superfamily. Dehydroquinate synthase family. Requires Co(2+) as cofactor. Zn(2+) is required as a cofactor. It depends on NAD(+) as a cofactor.

The protein localises to the cytoplasm. It catalyses the reaction 7-phospho-2-dehydro-3-deoxy-D-arabino-heptonate = 3-dehydroquinate + phosphate. The protein operates within metabolic intermediate biosynthesis; chorismate biosynthesis; chorismate from D-erythrose 4-phosphate and phosphoenolpyruvate: step 2/7. In terms of biological role, catalyzes the conversion of 3-deoxy-D-arabino-heptulosonate 7-phosphate (DAHP) to dehydroquinate (DHQ). This chain is 3-dehydroquinate synthase, found in Dehalococcoides mccartyi (strain CBDB1).